Consider the following 671-residue polypeptide: Condensin complex subunit 2 (671 aa).

Over residues 1 to 24 (MDESLTPNPKQKPASTTTRIQAPT) the composition is skewed to polar residues. Disordered regions lie at residues 1–33 (MDES…GSND), 404–444 (NSWA…KQAE), and 510–564 (RRKN…ISQP). The Kleisin-gamma middle domain (GM domain) involved in chromosome-binding motif lies at 406–415 (WAGPDHWKYR). Over residues 536-556 (VYDDDDGPFDDNENDQSDAED) the composition is skewed to acidic residues.

It belongs to the CND2 (condensin subunit 2) family. Component of the condensin complex. As to expression, mostly expressed in flower buds and flowers, and, to a lower extent, in roots, stems, leaves and seedlings.

It is found in the cytoplasm. It localises to the chromosome. In terms of biological role, regulatory subunit of the condensin complex, a complex required for conversion of interphase chromatin into mitotic-like condense chromosomes. The condensin complex probably introduces positive supercoils into relaxed DNA in the presence of type I topoisomerases and converts nicked DNA into positive knotted forms in the presence of type II topoisomerases. Essential protein. This Arabidopsis thaliana (Mouse-ear cress) protein is Condensin complex subunit 2 (CAPH).